The following is a 276-amino-acid chain: Diaminopimelate epimerase (276 aa).

The substrate site is built by N13, Q46, and N66. C75 acts as the Proton donor in catalysis. Residues 76–77, N159, N192, and 210–211 contribute to the substrate site; these read GN and ER. C219 serves as the catalytic Proton acceptor. Substrate is bound at residue 220–221; it reads GT.

Belongs to the diaminopimelate epimerase family. As to quaternary structure, homodimer.

The protein localises to the cytoplasm. It catalyses the reaction (2S,6S)-2,6-diaminopimelate = meso-2,6-diaminopimelate. Its pathway is amino-acid biosynthesis; L-lysine biosynthesis via DAP pathway; DL-2,6-diaminopimelate from LL-2,6-diaminopimelate: step 1/1. In terms of biological role, catalyzes the stereoinversion of LL-2,6-diaminopimelate (L,L-DAP) to meso-diaminopimelate (meso-DAP), a precursor of L-lysine and an essential component of the bacterial peptidoglycan. The chain is Diaminopimelate epimerase from Pseudomonas syringae pv. syringae (strain B728a).